Here is a 464-residue protein sequence, read N- to C-terminus: Glutamate--tRNA ligase (464 aa).

Positions Pro8 to Asn18 match the 'HIGH' region motif. Zn(2+) contacts are provided by Cys96, Cys98, Cys123, and His125. The 'KMSKS' region motif lies at Lys240–Arg244. Lys243 contributes to the ATP binding site.

It belongs to the class-I aminoacyl-tRNA synthetase family. Glutamate--tRNA ligase type 1 subfamily. As to quaternary structure, monomer. Requires Zn(2+) as cofactor.

It localises to the cytoplasm. It catalyses the reaction tRNA(Glu) + L-glutamate + ATP = L-glutamyl-tRNA(Glu) + AMP + diphosphate. Its function is as follows. Catalyzes the attachment of glutamate to tRNA(Glu) in a two-step reaction: glutamate is first activated by ATP to form Glu-AMP and then transferred to the acceptor end of tRNA(Glu). The sequence is that of Glutamate--tRNA ligase from Hydrogenobaculum sp. (strain Y04AAS1).